Reading from the N-terminus, the 135-residue chain is Immunity protein RhsIA (135 aa).

The tract at residues 58-77 is disordered; it reads RKQGRQISLSCGEPPEYSPD.

In terms of biological role, immunity component of a toxin-immunity protein module, which functions as a cellular contact-dependent growth inhibition (CDI) system. Specifically inhibits its cognate toxin RhsA. Cell contact is necessary for growth inhibition. In Dickeya dadantii (strain 3937) (Erwinia chrysanthemi (strain 3937)), this protein is Immunity protein RhsIA (rhsIA).